The chain runs to 211 residues: MNGILISLEGPDGAGKTTVLKEILPEIQKMKREIVPTREPGGVRVAEEIRQIILDPKNTDIDSKTELMLFAAARRLHMQEKMLPALQAGKVVIVDRFIDSSVAYQGYGRDLGVEVVDWLNYFATDGLKPDLTLYFDVDTDVALERIMKNRADEVNRLDLERAEMHRKVREGYLEIVVKEPERFVKIDASQPLEKVVADTLSVLKKRFVSEF.

10–17 serves as a coordination point for ATP; it reads GPDGAGKT.

Belongs to the thymidylate kinase family.

The enzyme catalyses dTMP + ATP = dTDP + ADP. Functionally, phosphorylation of dTMP to form dTDP in both de novo and salvage pathways of dTTP synthesis. The polypeptide is Thymidylate kinase (tmk) (Lactococcus lactis subsp. lactis (strain IL1403) (Streptococcus lactis)).